The sequence spans 663 residues: Leishmanolysin-like peptidase (663 aa).

H246 contacts Zn(2+). The active site involves E247. Residues H250 and H353 each contribute to the Zn(2+) site.

Belongs to the peptidase M8 family. It depends on Zn(2+) as a cofactor.

It is found in the cytoplasm. Its function is as follows. Metalloprotease. This chain is Leishmanolysin-like peptidase, found in Caenorhabditis briggsae.